The sequence spans 286 residues: Thiamine-monophosphate kinase (286 aa).

The Mg(2+) site is built by D22, S36, T37, and D38. D45 contacts substrate. The Mg(2+) site is built by D66 and D111. Residues 110 to 111 (GD) and R136 contribute to the ATP site. D191 serves as a coordination point for Mg(2+). S193 contributes to the ATP binding site. Residue D194 participates in Mg(2+) binding. Y282 is a binding site for substrate.

It belongs to the thiamine-monophosphate kinase family.

The enzyme catalyses thiamine phosphate + ATP = thiamine diphosphate + ADP. It participates in cofactor biosynthesis; thiamine diphosphate biosynthesis; thiamine diphosphate from thiamine phosphate: step 1/1. Functionally, catalyzes the ATP-dependent phosphorylation of thiamine-monophosphate (TMP) to form thiamine-pyrophosphate (TPP), the active form of vitamin B1. In Methanospirillum hungatei JF-1 (strain ATCC 27890 / DSM 864 / NBRC 100397 / JF-1), this protein is Thiamine-monophosphate kinase.